A 472-amino-acid polypeptide reads, in one-letter code: MATKCGKCGPGYPSPLEAMKGPREELVYLPCIYRNTGTEAPDYLATVDVNPKSPQYSQVIHRLPMPNLKDELHHSGWNTCSSCFGDSTKSRTKLLLPSLISSRVYVVDVATEPRAPKLHKVVEPEEIHAKCDLSYLHTSHCLASGEVMISALGDPRGNGKGGFVLLDGETFEVKGTWEQPGGAAPMGYDFWYQPRHNVMISTEWAAPNVLRDGFNPADVEAGLYGQHLYVWDWQRHERVQTLTLQDGLIPLEIRFLHNPAADQGFVGCALGSNIQRFYKNQGGTWSVEKVIQVPPKKVKGWILPEMPSLITDILLSLDDRFLYFSNWLHGDLRQYDISDPKRPRLVGQIFLGGSIVKGGPVQVLEDQELKCQPEPLVVKGKRVAGGPQMIQLSLDGTRLYVTTSLYSAWDKQFYPDLIREGSVMLQIDVDTVRGGLKLNPNFLVDFGKEPLGPALAHELRYPGGDCSSDIWL.

Ala2 carries the post-translational modification N-acetylalanine. Ser467 bears the Phosphoserine mark.

It belongs to the selenium-binding protein family. In terms of assembly, interacts with USP33. In terms of processing, the N-terminus is blocked.

It is found in the nucleus. It localises to the cytoplasm. Its subcellular location is the cytosol. The protein localises to the membrane. It carries out the reaction methanethiol + O2 + H2O = hydrogen sulfide + formaldehyde + H2O2 + H(+). The protein operates within organosulfur degradation. In terms of biological role, catalyzes the oxidation of methanethiol, an organosulfur compound known to be produced in substantial amounts by gut bacteria. Selenium-binding protein which may be involved in the sensing of reactive xenobiotics in the cytoplasm. May be involved in intra-Golgi protein transport. In Bos taurus (Bovine), this protein is Methanethiol oxidase (SELENBP1).